Consider the following 237-residue polypeptide: Ribonuclease PH (237 aa).

Residues R86 and 124–126 (GTR) contribute to the phosphate site.

Belongs to the RNase PH family. Homohexameric ring arranged as a trimer of dimers.

The catalysed reaction is tRNA(n+1) + phosphate = tRNA(n) + a ribonucleoside 5'-diphosphate. Phosphorolytic 3'-5' exoribonuclease that plays an important role in tRNA 3'-end maturation. Removes nucleotide residues following the 3'-CCA terminus of tRNAs; can also add nucleotides to the ends of RNA molecules by using nucleoside diphosphates as substrates, but this may not be physiologically important. Probably plays a role in initiation of 16S rRNA degradation (leading to ribosome degradation) during starvation. This is Ribonuclease PH from Bradyrhizobium diazoefficiens (strain JCM 10833 / BCRC 13528 / IAM 13628 / NBRC 14792 / USDA 110).